Consider the following 53-residue polypeptide: ATP synthase protein 8 (53 aa).

Residues 10–30 (IMVFLVSMALLWAIMTMVFFL) form a helical membrane-spanning segment.

The protein belongs to the ATPase protein 8 family. F-type ATPases have 2 components, CF(1) - the catalytic core - and CF(0) - the membrane proton channel.

Its subcellular location is the mitochondrion membrane. Its function is as follows. Mitochondrial membrane ATP synthase (F(1)F(0) ATP synthase or Complex V) produces ATP from ADP in the presence of a proton gradient across the membrane which is generated by electron transport complexes of the respiratory chain. F-type ATPases consist of two structural domains, F(1) - containing the extramembraneous catalytic core and F(0) - containing the membrane proton channel, linked together by a central stalk and a peripheral stalk. During catalysis, ATP synthesis in the catalytic domain of F(1) is coupled via a rotary mechanism of the central stalk subunits to proton translocation. Part of the complex F(0) domain. Minor subunit located with subunit a in the membrane. This is ATP synthase protein 8 (MT-ATP8) from Artemia franciscana (Brine shrimp).